A 375-amino-acid chain; its full sequence is 5-amino-6-(D-ribitylamino)uracil--L-tyrosine 4-hydroxyphenyl transferase 1 (375 aa).

A Radical SAM core domain is found at 50 to 284 (VTYVVNRNIN…AVSRILFHGH (235 aa)). Positions 64, 68, and 71 each coordinate [4Fe-4S] cluster.

It belongs to the radical SAM superfamily. CofH family. In terms of assembly, consists of two subunits, CofG and CofH. It depends on [4Fe-4S] cluster as a cofactor.

The catalysed reaction is 5-amino-6-(D-ribitylamino)uracil + L-tyrosine + S-adenosyl-L-methionine = 5-amino-5-(4-hydroxybenzyl)-6-(D-ribitylimino)-5,6-dihydrouracil + 2-iminoacetate + 5'-deoxyadenosine + L-methionine + H(+). Its pathway is cofactor biosynthesis; coenzyme F0 biosynthesis. Catalyzes the radical-mediated synthesis of 5-amino-5-(4-hydroxybenzyl)-6-(D-ribitylimino)-5,6-dihydrouracil from 5-amino-6-(D-ribitylamino)uracil and L-tyrosine. The chain is 5-amino-6-(D-ribitylamino)uracil--L-tyrosine 4-hydroxyphenyl transferase 1 from Methanosarcina acetivorans (strain ATCC 35395 / DSM 2834 / JCM 12185 / C2A).